Consider the following 224-residue polypeptide: Oocyte zinc finger protein XlCOF6.1 (224 aa).

C2H2-type zinc fingers lie at residues 6–28 (FSCS…CRSH), 34–56 (FHCT…QRYH), 62–84 (FTCF…IRMH), 90–112 (FSCS…QKIH), 118–140 (FSCS…YRTH), 146–168 (FPCP…RRTH), 174–196 (FACS…RLGH), and 202–224 (FSCS…LKSH).

The protein belongs to the krueppel C2H2-type zinc-finger protein family.

Its subcellular location is the nucleus. In terms of biological role, may be involved in transcriptional regulation. The protein is Oocyte zinc finger protein XlCOF6.1 of Xenopus laevis (African clawed frog).